Here is a 385-residue protein sequence, read N- to C-terminus: Probable alginate O-acetylase AlgJ (385 aa).

A signal peptide spans 1-21; the sequence is MTRTLRITYSLSFLGLLVGMG. Residue aspartate 190 is part of the active site. The active-site Proton acceptor is histidine 192. The active-site Nucleophile is the serine 288.

It belongs to the AlgJ family.

It is found in the cell inner membrane. Its subcellular location is the periplasm. Its pathway is glycan biosynthesis; alginate biosynthesis. Together with AlgI and AlgF, forms an inner membrane complex which probably interacts with the alginate polymerization-transport complex and adds acetyl groups at the O-2 and O-3 positions of mannuronate residues. Acetylation of alginate is important for the architecture of biofilms and increases the ability of alginate to act as a defense barrier. In Pseudomonas putida (strain ATCC 47054 / DSM 6125 / CFBP 8728 / NCIMB 11950 / KT2440), this protein is Probable alginate O-acetylase AlgJ (algJ).